Reading from the N-terminus, the 242-residue chain is Putative pyrimidine-specific ribonucleoside hydrolase RihB (242 aa).

The substrate site is built by Q156 and H168.

The protein belongs to the IUNH family. RihB subfamily.

The catalysed reaction is a pyrimidine ribonucleoside + H2O = a pyrimidine nucleobase + D-ribose. The chain is Putative pyrimidine-specific ribonucleoside hydrolase RihB (rihB) from Shigella boydii serotype 4 (strain Sb227).